Reading from the N-terminus, the 165-residue chain is Large ribosomal subunit protein uL10 (165 aa).

Belongs to the universal ribosomal protein uL10 family. As to quaternary structure, part of the ribosomal stalk of the 50S ribosomal subunit. The N-terminus interacts with L11 and the large rRNA to form the base of the stalk. The C-terminus forms an elongated spine to which L12 dimers bind in a sequential fashion forming a multimeric L10(L12)X complex.

In terms of biological role, forms part of the ribosomal stalk, playing a central role in the interaction of the ribosome with GTP-bound translation factors. The protein is Large ribosomal subunit protein uL10 (rplJ) of Halalkalibacterium halodurans (strain ATCC BAA-125 / DSM 18197 / FERM 7344 / JCM 9153 / C-125) (Bacillus halodurans).